The following is a 214-amino-acid chain: Urease accessory protein UreG 2 (214 aa).

Residue 22–29 (GPVGSGKT) participates in GTP binding.

It belongs to the SIMIBI class G3E GTPase family. UreG subfamily. Homodimer. UreD, UreF and UreG form a complex that acts as a GTP-hydrolysis-dependent molecular chaperone, activating the urease apoprotein by helping to assemble the nickel containing metallocenter of UreC. The UreE protein probably delivers the nickel.

It localises to the cytoplasm. Functionally, facilitates the functional incorporation of the urease nickel metallocenter. This process requires GTP hydrolysis, probably effectuated by UreG. The polypeptide is Urease accessory protein UreG 2 (Bradyrhizobium sp. (strain BTAi1 / ATCC BAA-1182)).